Consider the following 695-residue polypeptide: Interleukin-1 receptor accessory protein-like 1 (695 aa).

Residues 1–24 (MKAPIPHLILLYATFTQSLKVVTK) form the signal peptide. The Ig-like C2-type 1 domain occupies 25 to 134 (RGSADGCTDW…YCMKVSISLT (110 aa)). Residues 25-357 (RGSADGCTDW…LLHKRELMYT (333 aa)) are Extracellular-facing. 2 cysteine pairs are disulfide-bonded: Cys31/Cys126 and Cys53/Cys118. 3 N-linked (GlcNAc...) asparagine glycosylation sites follow: Asn63, Asn122, and Asn138. Disulfide bonds link Cys143–Cys185 and Cys164–Cys216. Ig-like C2-type domains are found at residues 143-232 (CYNS…TELT) and 242-350 (PKLL…VLLH). N-linked (GlcNAc...) asparagine glycans are attached at residues Asn213, Asn264, and Asn331. The cysteines at positions 267 and 334 are disulfide-linked. Residues 358 to 378 (VELAGGLGAILLLLICSVTIY) traverse the membrane as a helical segment. Over 379-695 (KCYKIEIMLF…RETSISSVIW (317 aa)) the chain is Cytoplasmic. The 156-residue stretch at 403–558 (KDYDAYLSYT…KFWKRLQYEM (156 aa)) folds into the TIR domain. Residue Glu490 is part of the active site. Residues 548–643 (SKFWKRLQYE…TGTLPLTSIG (96 aa)) form an interaction with NCS1 region. The tract at residues 657–679 (NGQRPQTKSNREPNPDEAHTNSA) is disordered. Residues 665-675 (SNREPNPDEAH) are compositionally biased toward basic and acidic residues.

It belongs to the interleukin-1 receptor family. As to quaternary structure, homodimer. Interacts (calcium-independent) with NCS1/FREQ. Interacts (via the first immunoglobilin domain) with PTPRD (via the second immunoglobilin domain); this interaction is PTPRD-splicing-dependent and induces pre- and post-synaptic differentiation of neurons and is required for IL1RAPL1-mediated synapse formation. As to expression, detected in total brain extracts, olfactory bulb, hippocampus and striatum (at protein level).

It is found in the cell membrane. The protein resides in the cytoplasm. It localises to the cell projection. Its subcellular location is the axon. The protein localises to the dendrite. The catalysed reaction is NAD(+) + H2O = ADP-D-ribose + nicotinamide + H(+). Functionally, may regulate secretion and presynaptic differentiation through inhibition of the activity of N-type voltage-gated calcium channel. May activate the MAP kinase JNK. Plays a role in neurite outgrowth. During dendritic spine formation can bidirectionally induce pre- and post-synaptic differentiation of neurons by trans-synaptically binding to PTPRD. The sequence is that of Interleukin-1 receptor accessory protein-like 1 (Il1rapl1) from Mus musculus (Mouse).